A 413-amino-acid chain; its full sequence is MVYLQKQDKEVFDAIKLELGRQRANIELIASENFVSEQVMEAMGSVLTNKYAEGYPGKRYYGGCEFVDIVEDLARDRAKKLFGAEYANVQPHSGAQANMAVYHTVLEPGDTVLGMNLSHGGHLTHGSPVNFSGVLYNFVEYGVREDTKEIDYDIVREAALKHKPKMIVAGASAYPRKIDFAKFREIADEVGAYLMVDMAHIAGLVAAGLHQNPVPYADFTTTTTHKTLRGPRGGMILAKAEWEQKLNKSIFPGIQGGPLMHVIAAKAVAFGEALQPEFTTYCEQIIRNSKKLAETLQANDVAVLTGGSDNHLLLIDLKPLGLTGKAAEKVLDEVGITVNKNTIPFETESPFVTSGIRVGVAAVTTRGFDEVAIEKVGVLISEVLHNLENEEVLADVKARVATLTNEYPLYPSL.

(6S)-5,6,7,8-tetrahydrofolate contacts are provided by residues Leu-117 and 121 to 123 (GHL). At Lys-226 the chain carries N6-(pyridoxal phosphate)lysine. 349–351 (SPF) serves as a coordination point for (6S)-5,6,7,8-tetrahydrofolate.

Belongs to the SHMT family. As to quaternary structure, homodimer. Pyridoxal 5'-phosphate is required as a cofactor.

The protein localises to the cytoplasm. The catalysed reaction is (6R)-5,10-methylene-5,6,7,8-tetrahydrofolate + glycine + H2O = (6S)-5,6,7,8-tetrahydrofolate + L-serine. The protein operates within one-carbon metabolism; tetrahydrofolate interconversion. It functions in the pathway amino-acid biosynthesis; glycine biosynthesis; glycine from L-serine: step 1/1. Functionally, catalyzes the reversible interconversion of serine and glycine with tetrahydrofolate (THF) serving as the one-carbon carrier. This reaction serves as the major source of one-carbon groups required for the biosynthesis of purines, thymidylate, methionine, and other important biomolecules. Also exhibits THF-independent aldolase activity toward beta-hydroxyamino acids, producing glycine and aldehydes, via a retro-aldol mechanism. This Listeria monocytogenes serovar 1/2a (strain ATCC BAA-679 / EGD-e) protein is Serine hydroxymethyltransferase.